A 1022-amino-acid polypeptide reads, in one-letter code: Antigenic heat-stable 120 kDa protein (1022 aa).

The interval M1–E33 is disordered. Basic and acidic residues predominate over residues P14–K24.

It is found in the cytoplasm. This chain is Antigenic heat-stable 120 kDa protein (sca4), found in Rickettsia prowazekii (strain Madrid E).